The following is a 245-amino-acid chain: 14-3-3 protein theta (245 aa).

An N-acetylmethionine modification is found at Met1. Lys3 is modified (N6-acetyllysine). An N6-acetyllysine; alternate modification is found at Lys49. A Glycyl lysine isopeptide (Lys-Gly) (interchain with G-Cter in SUMO2); alternate cross-link involves residue Lys49. Lys68 is modified (N6-acetyllysine). At Tyr82 the chain carries 3'-nitrotyrosine. Residue Ser92 is modified to Phosphoserine. The residue at position 104 (Tyr104) is a 3'-nitrotyrosine. Position 115 is an N6-acetyllysine (Lys115). Ser232 bears the Phosphoserine; by CK1 mark.

It belongs to the 14-3-3 family. As to quaternary structure, homodimer. Interacts with CDKN1B ('Thr-198' phosphorylated form); the interaction translocates CDKN1B to the cytoplasm. Interacts with SSH1. Interacts with GAB2. Interacts with RGS7 (phosphorylated form). Interacts with CDK16. Interacts with the 'Ser-241' phosphorylated form of PDPK1. Interacts with the 'Thr-369' phosphorylated form of DAPK2. Interacts with PI4KB, TBC1D22A and TBC1D22B. Interacts with SLITRK1. Interacts with RIPOR2. Interacts with INAVA; the interaction increases upon PRR (pattern recognition receptor) stimulation and is required for cellular signaling pathway activation and cytokine secretion. Interacts with MARK2, MARK3 and MARK4. Interacts with MEFV.

The protein resides in the cytoplasm. Its function is as follows. Adapter protein implicated in the regulation of a large spectrum of both general and specialized signaling pathways. Binds to a large number of partners, usually by recognition of a phosphoserine or phosphothreonine motif. Binding generally results in the modulation of the activity of the binding partner. Negatively regulates the kinase activity of PDPK1. This Mus musculus (Mouse) protein is 14-3-3 protein theta (Ywhaq).